We begin with the raw amino-acid sequence, 204 residues long: Prephenate decarboxylase (204 aa).

The protein belongs to the prephenate decarboxylase family.

Its subcellular location is the cytoplasm. The catalysed reaction is prephenate + H(+) = 3-[(4R)-4-hydroxycyclohexa-1,5-dien-1-yl]-2-oxopropanoate + CO2. It functions in the pathway antibiotic biosynthesis; bacilysin biosynthesis. Part of the bacABCDEF operon responsible for the biosynthesis of the nonribosomally synthesized dipeptide antibiotic bacilysin, composed of L-alanine and L-anticapsin. Bacilysin is an irreversible inactivator of the glutaminase domain of glucosamine synthetase. BacA is an unusual prephenate decarboxylase that avoids the typical aromatization of the cyclohexadienol ring of prephenate. BacA catalyzes the protonation of prephenate (1-carboxy-4-hydroxy-alpha-oxo-2,5-cyclohexadiene-1-propanoic acid) at C6 position, followed by a decarboxylation to produce the endocyclic-delta(4),delta(8)-7R-dihydro-hydroxyphenylpyruvate (en-H2HPP). En-H2HPP is able to undergo a slow nonenzymatic isomerization to produce the exocyclic-delta(3),delta(5)-dihydro-hydroxyphenylpyruvate (ex-H2HPP). BacA isomerizes only the pro-R double bond in prephenate. The protein is Prephenate decarboxylase of Bacillus amyloliquefaciens (Bacillus velezensis).